We begin with the raw amino-acid sequence, 284 residues long: MSAKIIDGKAIALSVRQRVAARVAERKAKGLRAPGLAVVLVGEDAASQVYVGSKRRACEEVGFISKSYDLAPTITQDELLALIDQLNADPTIDGVLVQLPLPAHLDSTQVIERILPNKDVDGFHPYNVGRLAQRIPALRPCTPKGMMTLLENTGVKIKGMHAVVVGASNIVGRPMTLELLLAGCTTTTCHRFTKGLEQFVRQADILVVAVGKAEFIPGEWIKPGAIVLDVGINRLSNGKLVGDVEYPTAAQHASFITPVPGGVGPMTVATLIENTLQACEQYHS.

Residues Gly166–Ser168 and Ile232 contribute to the NADP(+) site.

This sequence belongs to the tetrahydrofolate dehydrogenase/cyclohydrolase family. In terms of assembly, homodimer.

It carries out the reaction (6R)-5,10-methylene-5,6,7,8-tetrahydrofolate + NADP(+) = (6R)-5,10-methenyltetrahydrofolate + NADPH. The catalysed reaction is (6R)-5,10-methenyltetrahydrofolate + H2O = (6R)-10-formyltetrahydrofolate + H(+). It functions in the pathway one-carbon metabolism; tetrahydrofolate interconversion. Functionally, catalyzes the oxidation of 5,10-methylenetetrahydrofolate to 5,10-methenyltetrahydrofolate and then the hydrolysis of 5,10-methenyltetrahydrofolate to 10-formyltetrahydrofolate. The sequence is that of Bifunctional protein FolD from Tolumonas auensis (strain DSM 9187 / NBRC 110442 / TA 4).